Reading from the N-terminus, the 154-residue chain is Large ribosomal subunit protein uL13 (154 aa).

It belongs to the universal ribosomal protein uL13 family. As to quaternary structure, part of the 50S ribosomal subunit.

In terms of biological role, this protein is one of the early assembly proteins of the 50S ribosomal subunit, although it is not seen to bind rRNA by itself. It is important during the early stages of 50S assembly. This is Large ribosomal subunit protein uL13 from Borrelia garinii subsp. bavariensis (strain ATCC BAA-2496 / DSM 23469 / PBi) (Borreliella bavariensis).